The primary structure comprises 440 residues: C4-dicarboxylate transport protein (440 aa).

The next 9 membrane-spanning stretches (helical) occupy residues 15–35 (VLVAITIGILLGHYYPETGVA), 46–66 (LIKMVIAPIIFCTVVSGIAGM), 78–98 (YALLYFEIVSTIALIIGLVVV), 146–166 (AFANGDILQVLMFSVLFGFAL), 190–210 (IINMIMKLAPIGAFGAMAFTI), 224–244 (LMACFYITCLLFVLVVLGGIC), 291–311 (VVGLVIPTGYSFNLDGTSIYL), 332–352 (ITLLLVLLVASKGAAGVTGSG), and 354–374 (IVLAATLSAVGHLPVAGLALI). The disordered stretch occupies residues 420-440 (GAPLVDTRPTDDLGVAEGPAR).

It belongs to the dicarboxylate/amino acid:cation symporter (DAACS) (TC 2.A.23) family.

The protein resides in the cell inner membrane. Functionally, responsible for the transport of dicarboxylates such as succinate, fumarate, and malate from the periplasm across the membrane. This chain is C4-dicarboxylate transport protein, found in Pseudomonas putida (strain ATCC 700007 / DSM 6899 / JCM 31910 / BCRC 17059 / LMG 24140 / F1).